Here is a 320-residue protein sequence, read N- to C-terminus: tRNA dimethylallyltransferase (320 aa).

5-12 (GPTAVGKS) contributes to the ATP binding site. 7 to 12 (TAVGKS) provides a ligand contact to substrate. An interaction with substrate tRNA region spans residues 30–33 (DSMQ).

This sequence belongs to the IPP transferase family. As to quaternary structure, monomer. The cofactor is Mg(2+).

The catalysed reaction is adenosine(37) in tRNA + dimethylallyl diphosphate = N(6)-dimethylallyladenosine(37) in tRNA + diphosphate. Functionally, catalyzes the transfer of a dimethylallyl group onto the adenine at position 37 in tRNAs that read codons beginning with uridine, leading to the formation of N6-(dimethylallyl)adenosine (i(6)A). In Heliobacterium modesticaldum (strain ATCC 51547 / Ice1), this protein is tRNA dimethylallyltransferase.